Reading from the N-terminus, the 544-residue chain is T-complex protein 1 subunit gamma (544 aa).

C368 and C374 are disulfide-bonded. Residues 525–544 (SKKRGGNEPTNPAAMAQGQE) are disordered.

It belongs to the TCP-1 chaperonin family. Heterooligomeric complex of about 850 to 900 kDa that forms two stacked rings, 12 to 16 nm in diameter.

It localises to the cytoplasm. In terms of biological role, molecular chaperone; assists the folding of proteins upon ATP hydrolysis. Known to play a role, in vitro, in the folding of actin and tubulin. This is T-complex protein 1 subunit gamma from Drosophila melanogaster (Fruit fly).